The chain runs to 444 residues: Tubulin beta-4A chain (444 aa).

Residues 1 to 4 carry the MREI motif motif; it reads MREI. GTP-binding residues include Q11, E69, S138, G142, T143, and G144. Position 69 (E69) interacts with Mg(2+). S172 bears the Phosphoserine; by CDK1 mark. Residues N204 and N226 each contribute to the GTP site. A 5-glutamyl polyglutamate modification is found at E436.

Belongs to the tubulin family. Dimer of alpha and beta chains. A typical microtubule is a hollow water-filled tube with an outer diameter of 25 nm and an inner diameter of 15 nM. Alpha-beta heterodimers associate head-to-tail to form protofilaments running lengthwise along the microtubule wall with the beta-tubulin subunit facing the microtubule plus end conferring a structural polarity. Microtubules usually have 13 protofilaments but different protofilament numbers can be found in some organisms and specialized cells. The cofactor is Mg(2+). Post-translationally, some glutamate residues at the C-terminus are polyglycylated, resulting in polyglycine chains on the gamma-carboxyl group. Glycylation is mainly limited to tubulin incorporated into axonemes (cilia and flagella) whereas glutamylation is prevalent in neuronal cells, centrioles, axonemes, and the mitotic spindle. Both modifications can coexist on the same protein on adjacent residues, and lowering polyglycylation levels increases polyglutamylation, and reciprocally. Cilia and flagella glycylation is required for their stability and maintenance. Flagella glycylation controls sperm motility. In terms of processing, some glutamate residues at the C-terminus are polyglutamylated, resulting in polyglutamate chains on the gamma-carboxyl group. Polyglutamylation plays a key role in microtubule severing by spastin (SPAST). SPAST preferentially recognizes and acts on microtubules decorated with short polyglutamate tails: severing activity by SPAST increases as the number of glutamates per tubulin rises from one to eight, but decreases beyond this glutamylation threshold. Glutamylation is also involved in cilia motility. Phosphorylated on Ser-172 by CDK1 during the cell cycle, from metaphase to telophase, but not in interphase. This phosphorylation inhibits tubulin incorporation into microtubules.

The protein localises to the cytoplasm. The protein resides in the cytoskeleton. Tubulin is the major constituent of microtubules, a cylinder consisting of laterally associated linear protofilaments composed of alpha- and beta-tubulin heterodimers. Microtubules grow by the addition of GTP-tubulin dimers to the microtubule end, where a stabilizing cap forms. Below the cap, tubulin dimers are in GDP-bound state, owing to GTPase activity of alpha-tubulin. The chain is Tubulin beta-4A chain (TUBB4A) from Bos taurus (Bovine).